Consider the following 281-residue polypeptide: Pantothenate synthetase (281 aa).

An ATP-binding site is contributed by 30–37 (MGYLHDGH). The active-site Proton donor is His37. Gln61 contacts (R)-pantoate. Gln61 provides a ligand contact to beta-alanine. An ATP-binding site is contributed by 147 to 150 (GEKD). (R)-pantoate is bound at residue Gln153. Residues Ile176 and 184–187 (KSSR) each bind ATP.

It belongs to the pantothenate synthetase family. In terms of assembly, homodimer.

It localises to the cytoplasm. The catalysed reaction is (R)-pantoate + beta-alanine + ATP = (R)-pantothenate + AMP + diphosphate + H(+). It functions in the pathway cofactor biosynthesis; (R)-pantothenate biosynthesis; (R)-pantothenate from (R)-pantoate and beta-alanine: step 1/1. In terms of biological role, catalyzes the condensation of pantoate with beta-alanine in an ATP-dependent reaction via a pantoyl-adenylate intermediate. The sequence is that of Pantothenate synthetase from Clostridium acetobutylicum (strain ATCC 824 / DSM 792 / JCM 1419 / IAM 19013 / LMG 5710 / NBRC 13948 / NRRL B-527 / VKM B-1787 / 2291 / W).